We begin with the raw amino-acid sequence, 199 residues long: Fe/S biogenesis protein NfuA (199 aa).

The [4Fe-4S] cluster site is built by Cys-151 and Cys-154.

This sequence belongs to the NfuA family. In terms of assembly, homodimer. Requires [4Fe-4S] cluster as cofactor.

Functionally, involved in iron-sulfur cluster biogenesis. Binds a 4Fe-4S cluster, can transfer this cluster to apoproteins, and thereby intervenes in the maturation of Fe/S proteins. Could also act as a scaffold/chaperone for damaged Fe/S proteins. This chain is Fe/S biogenesis protein NfuA, found in Xanthomonas campestris pv. campestris (strain 8004).